The primary structure comprises 656 residues: FAST kinase domain-containing protein 3, mitochondrial (656 aa).

An RAP domain is found at Val587–Arg645.

The protein belongs to the FAST kinase family.

The protein resides in the mitochondrion. In terms of biological role, required for normal mitochondrial respiration. Increases steady-state levels and half-lives of a subset of mature mitochondrial mRNAs MT-ND2, MT-ND3, MT-CYTB, MT-CO2, and MT-ATP8/6. Promotes MT-CO1 mRNA translation and increases mitochondrial complex IV assembly and activity. This Rattus norvegicus (Rat) protein is FAST kinase domain-containing protein 3, mitochondrial (Fastkd3).